The chain runs to 910 residues: Protein translocase subunit SecA (910 aa).

Residues glutamine 89, 107 to 111, and aspartate 496 each bind ATP; that span reads GEGKT. The tract at residues 873–910 is disordered; it reads QEFSGGNLNRSQSNGSSVTVTTSSGGGTERKTSRRRKR. Residues 876-886 are compositionally biased toward polar residues; the sequence is SGGNLNRSQSN.

It belongs to the SecA family. In terms of assembly, monomer and homodimer. Part of the essential Sec protein translocation apparatus which comprises SecA, SecYEG and auxiliary proteins SecDF. Other proteins may also be involved.

It is found in the cell inner membrane. Its subcellular location is the cytoplasm. It catalyses the reaction ATP + H2O + cellular proteinSide 1 = ADP + phosphate + cellular proteinSide 2.. Functionally, part of the Sec protein translocase complex. Interacts with the SecYEG preprotein conducting channel. Has a central role in coupling the hydrolysis of ATP to the transfer of proteins into and across the cell membrane, serving as an ATP-driven molecular motor driving the stepwise translocation of polypeptide chains across the membrane. The chain is Protein translocase subunit SecA from Leptospira interrogans serogroup Icterohaemorrhagiae serovar copenhageni (strain Fiocruz L1-130).